The primary structure comprises 370 residues: Aspartate-semialdehyde dehydrogenase 1 (370 aa).

Residues 9 to 12 (RGMV), 36 to 37 (TS), and Gln72 contribute to the NADP(+) site. Arg101 is a binding site for phosphate. Cys134 (acyl-thioester intermediate) is an active-site residue. Cys134 carries the S-cysteinyl cysteine; in inhibited form modification. Substrate is bound at residue Gln161. NADP(+) contacts are provided by residues 164–165 (SG) and Pro192. Glu240 lines the substrate pocket. Residue Lys243 coordinates phosphate. Arg267 contacts substrate. His274 (proton acceptor) is an active-site residue. Position 350 (Gln350) interacts with NADP(+).

Belongs to the aspartate-semialdehyde dehydrogenase family. Homodimer.

It catalyses the reaction L-aspartate 4-semialdehyde + phosphate + NADP(+) = 4-phospho-L-aspartate + NADPH + H(+). It functions in the pathway amino-acid biosynthesis; L-lysine biosynthesis via DAP pathway; (S)-tetrahydrodipicolinate from L-aspartate: step 2/4. Its pathway is amino-acid biosynthesis; L-methionine biosynthesis via de novo pathway; L-homoserine from L-aspartate: step 2/3. It participates in amino-acid biosynthesis; L-threonine biosynthesis; L-threonine from L-aspartate: step 2/5. Its activity is regulated as follows. Inhibited by S-methyl-L-cysteine sulfoxide in vitro, via the formation of a covalently bound cysteine at the active site Cys-134. Its function is as follows. Catalyzes the NADPH-dependent formation of L-aspartate-semialdehyde (L-ASA) by the reductive dephosphorylation of L-aspartyl-4-phosphate. The sequence is that of Aspartate-semialdehyde dehydrogenase 1 (asd1) from Vibrio cholerae serotype O1 (strain ATCC 39315 / El Tor Inaba N16961).